The primary structure comprises 189 residues: Ribonuclease HII (189 aa).

The RNase H type-2 domain occupies 1 to 189 (MIAGVDEAGR…PVRRALNIDC (189 aa)). Asp-6, Glu-7, and Asp-98 together coordinate a divalent metal cation.

Belongs to the RNase HII family. Requires Mn(2+) as cofactor. The cofactor is Mg(2+).

It is found in the cytoplasm. It carries out the reaction Endonucleolytic cleavage to 5'-phosphomonoester.. Endonuclease that specifically degrades the RNA of RNA-DNA hybrids. The chain is Ribonuclease HII from Acinetobacter baylyi (strain ATCC 33305 / BD413 / ADP1).